The sequence spans 403 residues: Phosphoglycerate kinase (403 aa).

Substrate contacts are provided by residues 21–23 (DFN), Arg-36, 59–62 (HLGR), Arg-119, and Arg-159. ATP contacts are provided by residues Lys-214, Gly-301, Glu-332, and 359 to 362 (GGDS).

It belongs to the phosphoglycerate kinase family. Monomer.

The protein localises to the cytoplasm. The enzyme catalyses (2R)-3-phosphoglycerate + ATP = (2R)-3-phospho-glyceroyl phosphate + ADP. It participates in carbohydrate degradation; glycolysis; pyruvate from D-glyceraldehyde 3-phosphate: step 2/5. The protein is Phosphoglycerate kinase of Lactobacillus delbrueckii subsp. bulgaricus (strain ATCC 11842 / DSM 20081 / BCRC 10696 / JCM 1002 / NBRC 13953 / NCIMB 11778 / NCTC 12712 / WDCM 00102 / Lb 14).